Consider the following 208-residue polypeptide: 3-isopropylmalate dehydratase small subunit 2 (208 aa).

It belongs to the LeuD family. LeuD type 1 subfamily. Heterodimer of LeuC and LeuD.

The catalysed reaction is (2R,3S)-3-isopropylmalate = (2S)-2-isopropylmalate. Its pathway is amino-acid biosynthesis; L-leucine biosynthesis; L-leucine from 3-methyl-2-oxobutanoate: step 2/4. Functionally, catalyzes the isomerization between 2-isopropylmalate and 3-isopropylmalate, via the formation of 2-isopropylmaleate. This is 3-isopropylmalate dehydratase small subunit 2 from Salmonella choleraesuis (strain SC-B67).